Reading from the N-terminus, the 295-residue chain is ATP synthase gamma chain (295 aa).

It belongs to the ATPase gamma chain family. F-type ATPases have 2 components, CF(1) - the catalytic core - and CF(0) - the membrane proton channel. CF(1) has five subunits: alpha(3), beta(3), gamma(1), delta(1), epsilon(1). CF(0) has three main subunits: a, b and c.

Its subcellular location is the cell inner membrane. Its function is as follows. Produces ATP from ADP in the presence of a proton gradient across the membrane. The gamma chain is believed to be important in regulating ATPase activity and the flow of protons through the CF(0) complex. In Maricaulis maris (strain MCS10) (Caulobacter maris), this protein is ATP synthase gamma chain.